Here is a 341-residue protein sequence, read N- to C-terminus: Methionine import ATP-binding protein MetN 2 (341 aa).

The ABC transporter domain maps to Ile-2–Ile-241. Gly-38–Ser-45 serves as a coordination point for ATP.

The protein belongs to the ABC transporter superfamily. Methionine importer (TC 3.A.1.24) family. The complex is composed of two ATP-binding proteins (MetN), two transmembrane proteins (MetI) and a solute-binding protein (MetQ).

The protein resides in the cell membrane. The enzyme catalyses L-methionine(out) + ATP + H2O = L-methionine(in) + ADP + phosphate + H(+). The catalysed reaction is D-methionine(out) + ATP + H2O = D-methionine(in) + ADP + phosphate + H(+). Its function is as follows. Part of the ABC transporter complex MetNIQ involved in methionine import. Responsible for energy coupling to the transport system. The sequence is that of Methionine import ATP-binding protein MetN 2 from Shouchella clausii (strain KSM-K16) (Alkalihalobacillus clausii).